Reading from the N-terminus, the 97-residue chain is Exodeoxyribonuclease 7 small subunit (97 aa).

The segment at 1 to 22 (MAKTASPGATPPGNGTEPLPDN) is disordered.

This sequence belongs to the XseB family. Heterooligomer composed of large and small subunits.

The protein localises to the cytoplasm. The enzyme catalyses Exonucleolytic cleavage in either 5'- to 3'- or 3'- to 5'-direction to yield nucleoside 5'-phosphates.. Bidirectionally degrades single-stranded DNA into large acid-insoluble oligonucleotides, which are then degraded further into small acid-soluble oligonucleotides. The chain is Exodeoxyribonuclease 7 small subunit from Burkholderia cenocepacia (strain HI2424).